The sequence spans 142 residues: MAKKVEAYVKLQVAAGMANPSPPVGPALGQRGVNIMEFCKAFNARTESLEKGLPIPVVITVYSDRSFTFETKTPPASVLLKKAAGIKSGSARPNTAKVGTITDAQIQEIAATKAADMTGADIEAMKRSIAGTARSMGLVVEG.

The protein belongs to the universal ribosomal protein uL11 family. As to quaternary structure, part of the ribosomal stalk of the 50S ribosomal subunit. Interacts with L10 and the large rRNA to form the base of the stalk. L10 forms an elongated spine to which L12 dimers bind in a sequential fashion forming a multimeric L10(L12)X complex. In terms of processing, one or more lysine residues are methylated.

Functionally, forms part of the ribosomal stalk which helps the ribosome interact with GTP-bound translation factors. The sequence is that of Large ribosomal subunit protein uL11 from Vibrio cholerae serotype O1 (strain ATCC 39541 / Classical Ogawa 395 / O395).